A 114-amino-acid chain; its full sequence is Probable non-functional T cell receptor beta variable 5-7 (114 aa).

Residues 1-21 (MGPGLLCWVLLCPLGEGPVDA) form the signal peptide. In terms of domain architecture, Ig-like spans 22–114 (GVTQSPTHLI…SALYLCASSL (93 aa)). A disulfide bridge connects residues Cys-42 and Cys-110. The N-linked (GlcNAc...) asparagine glycan is linked to Asn-90.

In terms of assembly, alpha-beta TR is a heterodimer composed of an alpha and beta chain; disulfide-linked. The alpha-beta TR is associated with the transmembrane signaling CD3 coreceptor proteins to form the TR-CD3 (TcR or TCR). The assembly of alpha-beta TR heterodimers with CD3 occurs in the endoplasmic reticulum where a single alpha-beta TR heterodimer associates with one CD3D-CD3E heterodimer, one CD3G-CD3E heterodimer and one CD247 homodimer forming a stable octameric structure. CD3D-CD3E and CD3G-CD3E heterodimers preferentially associate with TR alpha and TR beta chains, respectively. The association of the CD247 homodimer is the last step of TcR assembly in the endoplasmic reticulum and is required for transport to the cell surface.

It is found in the cell membrane. Functionally, probable non-functional open reading frame (ORF) of V region of the variable domain of T cell receptor (TR) beta chain. Non-functional ORF generally cannot participate in the synthesis of a productive T cell receptor (TR) chain due to altered V-(D)-J or switch recombination and/or splicing site (at mRNA level) and/or conserved amino acid change (protein level). Alpha-beta T cell receptors are antigen specific receptors which are essential to the immune response and are present on the cell surface of T lymphocytes. Recognize peptide-major histocompatibility (MH) (pMH) complexes that are displayed by antigen presenting cells (APC), a prerequisite for efficient T cell adaptive immunity against pathogens. Binding of alpha-beta TR to pMH complex initiates TR-CD3 clustering on the cell surface and intracellular activation of LCK that phosphorylates the ITAM motifs of CD3G, CD3D, CD3E and CD247 enabling the recruitment of ZAP70. In turn ZAP70 phosphorylates LAT, which recruits numerous signaling molecules to form the LAT signalosome. The LAT signalosome propagates signal branching to three major signaling pathways, the calcium, the mitogen-activated protein kinase (MAPK) kinase and the nuclear factor NF-kappa-B (NF-kB) pathways, leading to the mobilization of transcription factors that are critical for gene expression and essential for T cell growth and differentiation. The T cell repertoire is generated in the thymus, by V-(D)-J rearrangement. This repertoire is then shaped by intrathymic selection events to generate a peripheral T cell pool of self-MH restricted, non-autoaggressive T cells. Post-thymic interaction of alpha-beta TR with the pMH complexes shapes TR structural and functional avidity. The protein is Probable non-functional T cell receptor beta variable 5-7 of Homo sapiens (Human).